The following is a 236-amino-acid chain: Chloride intracellular channel protein 3 (236 aa).

The tract at residues 1 to 88 (MAETKLQLFV…EDFLEETLGP (88 aa)) is required for insertion into the membrane. In terms of domain architecture, GST N-terminal spans 12-90 (ASEDGESVGH…FLEETLGPPD (79 aa)). The short motif at 22–25 (CPSC) is the G-site element. Residues C22 and C25 are joined by a disulfide bond. The chain crosses the membrane as a helical span at residues 24–44 (SCQRLFMVLLLKGVPFTLTTV). Phosphoserine is present on residues S49 and S159. In terms of domain architecture, GST C-terminal spans 68 to 235 (DSDAKTDTLQ…LAAYRPAVHP (168 aa)).

It belongs to the chloride channel CLIC family. In terms of assembly, associated with the C-terminal of MAPK15. In terms of tissue distribution, detected in placenta (at protein level). Widely expressed. High expression is found in placenta followed by lung and heart. Low expression in skeletal muscle, kidney and pancreas.

It is found in the nucleus. Its subcellular location is the membrane. The protein localises to the cell membrane. The protein resides in the cytoplasm. It localises to the secreted. It is found in the extracellular space. Its subcellular location is the extracellular matrix. It carries out the reaction chloride(in) = chloride(out). Its activity is regulated as follows. Inhibited by rapamycin, amphotericin B and IAA-94. In the soluble state, catalyzes glutaredoxin-like thiol disulfide exchange reactions with reduced glutathione as electron donor. Reduced in a glutathione-dependent way and secreted into the extracellular matrix where it activates TGM2 and promotes blood vessel growth during tissue remodeling as occurs in tumorigenesis. Can reduce specific cysteines in TGM2 and regulate cofactor binding. Can insert into membranes and form outwardly rectifying chloride ion channels. May participate in cellular growth control. This is Chloride intracellular channel protein 3 from Homo sapiens (Human).